A 297-amino-acid chain; its full sequence is Malonyl-[acyl-carrier protein] O-methyltransferase (297 aa).

Belongs to the methyltransferase superfamily.

It carries out the reaction malonyl-[ACP] + S-adenosyl-L-methionine = malonyl-[ACP] methyl ester + S-adenosyl-L-homocysteine. Its pathway is cofactor biosynthesis; biotin biosynthesis. In terms of biological role, converts the free carboxyl group of a malonyl-thioester to its methyl ester by transfer of a methyl group from S-adenosyl-L-methionine (SAM). It allows to synthesize pimeloyl-ACP via the fatty acid synthetic pathway. This is Malonyl-[acyl-carrier protein] O-methyltransferase from Laribacter hongkongensis (strain HLHK9).